A 570-amino-acid polypeptide reads, in one-letter code: Proline--tRNA ligase (570 aa).

This sequence belongs to the class-II aminoacyl-tRNA synthetase family. ProS type 1 subfamily. As to quaternary structure, homodimer.

It localises to the cytoplasm. The enzyme catalyses tRNA(Pro) + L-proline + ATP = L-prolyl-tRNA(Pro) + AMP + diphosphate. In terms of biological role, catalyzes the attachment of proline to tRNA(Pro) in a two-step reaction: proline is first activated by ATP to form Pro-AMP and then transferred to the acceptor end of tRNA(Pro). As ProRS can inadvertently accommodate and process non-cognate amino acids such as alanine and cysteine, to avoid such errors it has two additional distinct editing activities against alanine. One activity is designated as 'pretransfer' editing and involves the tRNA(Pro)-independent hydrolysis of activated Ala-AMP. The other activity is designated 'posttransfer' editing and involves deacylation of mischarged Ala-tRNA(Pro). The misacylated Cys-tRNA(Pro) is not edited by ProRS. This chain is Proline--tRNA ligase, found in Geotalea daltonii (strain DSM 22248 / JCM 15807 / FRC-32) (Geobacter daltonii).